Here is a 118-residue protein sequence, read N- to C-terminus: uncharacterized protein (118 aa).

It to E.coli YeaO.

This is an uncharacterized protein from Mycobacterium bovis (strain ATCC BAA-935 / AF2122/97).